The sequence spans 653 residues: Dystrotelin (653 aa).

The ZZ-type zinc finger occupies 223-279 (THPVRCSVCRTFPIIGLRYHCLKCLDFDICELCFLSGLHKNSHEKSHTVMEECVQMS). Zn(2+)-binding residues include Cys-228, Cys-231, Cys-243, Cys-246, Cys-252, Cys-255, His-265, and His-269. Residues 384–411 (RDSLNTLLRERRLLRKQLHRYKQKLQGT) adopt a coiled-coil conformation.

In terms of tissue distribution, strongly expressed in the nervous and muscular tissues.

The protein localises to the cell membrane. The protein is Dystrotelin (Dytn) of Mus musculus (Mouse).